The chain runs to 82 residues: Small ribosomal subunit protein bS16 (82 aa).

The protein belongs to the bacterial ribosomal protein bS16 family.

The sequence is that of Small ribosomal subunit protein bS16 from Mannheimia succiniciproducens (strain KCTC 0769BP / MBEL55E).